Here is a 62-residue protein sequence, read N- to C-terminus: UPF0434 protein RSc2531 (62 aa).

Belongs to the UPF0434 family.

In Ralstonia nicotianae (strain ATCC BAA-1114 / GMI1000) (Ralstonia solanacearum), this protein is UPF0434 protein RSc2531.